The chain runs to 725 residues: Gamma-tubulin complex component 5 (725 aa).

Residues 222 to 246 are disordered; sequence TENEEKMSDNASASSGSDQGPSSRQ. A compositionally biased stretch (low complexity) spans 232-244; that stretch reads ASASSGSDQGPSS.

The protein belongs to the TUBGCP family. In terms of assembly, component of the gamma-tubulin ring complex (gTuRC) consisting of TUBGCP2, TUBGCP3, TUBGCP4, TUBGCP5 and TUBGCP6 and gamma-tubulin TUBG1 or TUBG2. TUBGCP2, TUBGCP3, TUBGCP4, TUBGCP5 and TUBGCP6 assemble in a 5:5:2:1:1 stoichiometry; each is associated with a gamma-tubulin, thereby arranging 14 gamma-tubulins in a helical manner. Gamma-tubulin at the first position is blocked by TUBGCP3 at the last position, allowing 13 protafilaments to grow into a microtubule. The gTuRC (via TUBGCP3 and TUBGCP6) interacts with ACTB and MZT1; the interactions form a luminal bridge that stabilizes the initial structure during complex assembly. The gTuRC (via TUBGCP2) interacts with MZT2A/MZT2B and CDK5RAP2 (via CM1 motif); the interactions play a role in gTuRC activation.

It localises to the cytoplasm. The protein localises to the cytoskeleton. The protein resides in the microtubule organizing center. Its subcellular location is the centrosome. Functionally, component of the gamma-tubulin ring complex (gTuRC) which mediates microtubule nucleation. The gTuRC regulates the minus-end nucleation of alpha-beta tubulin heterodimers that grow into microtubule protafilaments, a critical step in centrosome duplication and spindle formation. The protein is Gamma-tubulin complex component 5 (TUBGCP5) of Macaca fascicularis (Crab-eating macaque).